Reading from the N-terminus, the 24-residue chain is SCIKHGDFCDGDNDDCQCCRDNGF.

In terms of processing, disulfide bonds are present. As to expression, expressed by the venom gland.

The protein localises to the secreted. Functionally, omega-agatoxins are antagonists of voltage-gated calcium channels (Cav). This Ctenus ornatus (Brazilian spider) protein is U4-ctenitoxin-Co1b.